The chain runs to 154 residues: MTHCCSPCCQPTCCRTTCCRTTCWKPTTVTTCSSTPCCQPSCCVSSCCQPCCRPTCCQNTCCQPTCVTSCCQPSCCSTPCCQPTCCGSSCDQSSSCAPVYCRRTCYYPTTVCLPGCLNQSCGSNCCQPCCRPACCETTCFQPTCVSSCCQPFCC.

15 repeat units span residues 8 to 12 (CCQPT), 13 to 17 (CCRTT), 18 to 22 (CCRTT), 37 to 41 (CCQPS), 42 to 46 (CCVSS), 51 to 55 (CCRPT), 56 to 60 (CCQNT), 61 to 65 (CCQPT), 70 to 74 (CCQPS), 75 to 79 (CCSTP), 80 to 84 (CCQPT), 85 to 89 (CCGSS), 129 to 133 (CCRPA), 134 to 138 (CCETT), and 148 to 152 (CCQPF). The interval 8 to 152 (CCQPTCCRTT…TCVSSCCQPF (145 aa)) is 15 X 5 AA repeats of C-C-[RQVGE]-[SPTN]-[TASPF].

This sequence belongs to the KRTAP type 9 family. In terms of assembly, interacts with hair keratins.

In terms of biological role, in the hair cortex, hair keratin intermediate filaments are embedded in an interfilamentous matrix, consisting of hair keratin-associated proteins (KRTAP), which are essential for the formation of a rigid and resistant hair shaft through their extensive disulfide bond cross-linking with abundant cysteine residues of hair keratins. The matrix proteins include the high-sulfur and high-glycine-tyrosine keratins. In Homo sapiens (Human), this protein is Keratin-associated protein 9-4 (KRTAP9-4).